Consider the following 387-residue polypeptide: Probable nitrate transporter NarT (387 aa).

Transmembrane regions (helical) follow at residues 14 to 34 (TLSL…MPFI), 45 to 65 (ISVI…PFGY), 69 to 89 (IVGA…PIFL), 97 to 117 (GMLM…SVGV), 137 to 157 (GVGN…AGAI), 161 to 181 (NTVR…FFLG), 211 to 231 (WYFI…NFLV), 246 to 266 (GIFI…GDKF), 268 to 288 (AVQA…ILSL), 294 to 314 (LFTI…GLIF), 330 to 350 (GIVS…ITFV), and 358 to 378 (HLAF…MIHL).

This sequence belongs to the major facilitator superfamily. Nitrate/nitrite porter (TC 2.A.1.8) family.

It is found in the cell membrane. Probably required for nitrate uptake under anoxic conditions. Also possibly involved in excretion of nitrite produced by the dissimilatory reduction of nitrate. The chain is Probable nitrate transporter NarT (narT) from Staphylococcus epidermidis (strain ATCC 35984 / DSM 28319 / BCRC 17069 / CCUG 31568 / BM 3577 / RP62A).